The following is a 59-amino-acid chain: Large ribosomal subunit protein uL30 (59 aa).

The protein belongs to the universal ribosomal protein uL30 family. As to quaternary structure, part of the 50S ribosomal subunit.

This chain is Large ribosomal subunit protein uL30, found in Alkaliphilus oremlandii (strain OhILAs) (Clostridium oremlandii (strain OhILAs)).